A 365-amino-acid chain; its full sequence is Heat-inducible transcription repressor HrcA (365 aa).

It belongs to the HrcA family.

Its function is as follows. Negative regulator of class I heat shock genes (grpE-dnaK-dnaJ and groELS operons). Prevents heat-shock induction of these operons. This Trichormus variabilis (strain ATCC 29413 / PCC 7937) (Anabaena variabilis) protein is Heat-inducible transcription repressor HrcA.